The sequence spans 330 residues: Phosphate acyltransferase (330 aa).

This sequence belongs to the PlsX family. In terms of assembly, homodimer. Probably interacts with PlsY.

Its subcellular location is the cytoplasm. It catalyses the reaction a fatty acyl-[ACP] + phosphate = an acyl phosphate + holo-[ACP]. Its pathway is lipid metabolism; phospholipid metabolism. Catalyzes the reversible formation of acyl-phosphate (acyl-PO(4)) from acyl-[acyl-carrier-protein] (acyl-ACP). This enzyme utilizes acyl-ACP as fatty acyl donor, but not acyl-CoA. In Bacillus cereus (strain B4264), this protein is Phosphate acyltransferase.